The primary structure comprises 118 residues: Large ribosomal subunit protein bL20 (118 aa).

Belongs to the bacterial ribosomal protein bL20 family.

Binds directly to 23S ribosomal RNA and is necessary for the in vitro assembly process of the 50S ribosomal subunit. It is not involved in the protein synthesizing functions of that subunit. This Francisella tularensis subsp. holarctica (strain FTNF002-00 / FTA) protein is Large ribosomal subunit protein bL20.